The primary structure comprises 281 residues: Leukocyte antigen CD37 (281 aa).

Topologically, residues 1–17 (MSAQESCLSLIKYFLFV) are cytoplasmic. Residues 18–38 (FNLFFFVLGGLIFCFGTWILI) traverse the membrane as a helical segment. Over 39 to 59 (DKTSFVSFVGLSFVPLQTWSK) the chain is Extracellular. Residues 60–74 (VLSVSGVLTMALALL) form a helical membrane-spanning segment. Topologically, residues 75 to 85 (GCVGALKELRC) are cytoplasmic. The helical transmembrane segment at 86–111 (LLGLYFGMLLLLFATQITLGILISTQ) threads the bilayer. The Extracellular segment spans residues 112–241 (RVRLERRVQE…RSLQKWLHNN (130 aa)). N170, N183, and N188 each carry an N-linked (GlcNAc...) asparagine glycan. The helical transmembrane segment at 242–266 (IISIVGICLGVGLLELGFMTLSIFL) threads the bilayer. Topologically, residues 267-281 (CRNLDHVYDRLARYR) are cytoplasmic.

Belongs to the tetraspanin (TM4SF) family. Interacts with SCIMP. Interacts with SOCS3. Interacts with DECTIN1/CLEC7A. In terms of processing, tyrosine phosphorylated; leading to activation of downstream signaling pathways. As to expression, B-lymphocytes.

The protein localises to the cell membrane. In terms of biological role, structural component of specialized membrane microdomains known as tetraspanin-enriched microdomains (TERMs), which act as platforms for receptor clustering and signaling. Participates thereby in diverse biological functions such as cell signal transduction, adhesion, migration and protein trafficking. Upon ligand binding, two signaling pathways are activated, one acting through phosphorylation by LYN leading to cell death or a survival pathway with activation of GSK3B. Plays an essential role essential for clustering of integrin ITGA4/ITGB1 and promotes its mobility in the plasma membrane of B-cells. In turn, participates in ITGA4/ITGB1 integrin-mediated antiapoptotic signaling through AKT. Plays also a role in the migration of dendritic cells and neutrophils to draining lymph nodes, as well as in their integrin-mediated adhesion. Negatively regulates IL-6 responses through direct interaction with SOCS3 thereby preventing constitutive IL-6 signaling. Alternatively, inhibition of IL-6 signaling can also occur via interaction and stabilization of DECTIN1/CLEC7A at the cell membrane to inhibit its ability to promote the production of IL-6. This chain is Leukocyte antigen CD37 (Cd37), found in Rattus norvegicus (Rat).